The sequence spans 174 residues: Adenine phosphoribosyltransferase (174 aa).

It belongs to the purine/pyrimidine phosphoribosyltransferase family. In terms of assembly, homodimer.

It localises to the cytoplasm. The enzyme catalyses AMP + diphosphate = 5-phospho-alpha-D-ribose 1-diphosphate + adenine. It participates in purine metabolism; AMP biosynthesis via salvage pathway; AMP from adenine: step 1/1. In terms of biological role, catalyzes a salvage reaction resulting in the formation of AMP, that is energically less costly than de novo synthesis. In Lachnoclostridium phytofermentans (strain ATCC 700394 / DSM 18823 / ISDg) (Clostridium phytofermentans), this protein is Adenine phosphoribosyltransferase.